The following is a 383-amino-acid chain: uncharacterized protein (383 aa).

4 disordered regions span residues 1-30, 114-144, 262-289, and 341-360; these read MDLC…PTCT, ETKP…STAS, GEKR…ARTS, and AKDP…NSPQ. Over residues 10–26 the composition is skewed to acidic residues; it reads DLENGENNEIQSTEETE. Residues 128–141 show a composition bias toward low complexity; sequence SSPSQTQAAPQGPS. A compositionally biased stretch (basic and acidic residues) spans 262–271; that stretch reads GEKRPSELAK.

This is an uncharacterized protein from Macaca fascicularis (Crab-eating macaque).